The chain runs to 473 residues: 3-isopropylmalate dehydratase large subunit (473 aa).

Residues cysteine 354, cysteine 414, and cysteine 417 each coordinate [4Fe-4S] cluster.

It belongs to the aconitase/IPM isomerase family. LeuC type 1 subfamily. In terms of assembly, heterodimer of LeuC and LeuD. [4Fe-4S] cluster is required as a cofactor.

It catalyses the reaction (2R,3S)-3-isopropylmalate = (2S)-2-isopropylmalate. It functions in the pathway amino-acid biosynthesis; L-leucine biosynthesis; L-leucine from 3-methyl-2-oxobutanoate: step 2/4. Catalyzes the isomerization between 2-isopropylmalate and 3-isopropylmalate, via the formation of 2-isopropylmaleate. This is 3-isopropylmalate dehydratase large subunit from Mycobacterium tuberculosis (strain CDC 1551 / Oshkosh).